Here is a 436-residue protein sequence, read N- to C-terminus: Adenylyltransferase and sulfurtransferase UBA4 (436 aa).

ATP is bound by residues G74, D95, 102 to 106 (SNLHR), K119, and 163 to 164 (DT). Zn(2+)-binding residues include C205 and C208. C222 functions as the Glycyl thioester intermediate; for adenylyltransferase activity in the catalytic mechanism. Zn(2+) contacts are provided by C283 and C286. Residues 335–434 (NEKDHILIDV…YIDEEDHSYP (100 aa)) enclose the Rhodanese domain. The active-site Cysteine persulfide intermediate; for sulfurtransferase activity is C393.

The protein in the N-terminal section; belongs to the HesA/MoeB/ThiF family. UBA4 subfamily. Zn(2+) serves as cofactor.

The protein resides in the cytoplasm. It is found in the cytosol. It functions in the pathway tRNA modification; 5-methoxycarbonylmethyl-2-thiouridine-tRNA biosynthesis. Plays a central role in 2-thiolation of mcm(5)S(2)U at tRNA wobble positions of cytosolic tRNA(Lys), tRNA(Glu) and tRNA(Gln). Acts by mediating the C-terminal thiocarboxylation of sulfur carrier URM1. Its N-terminus first activates URM1 as acyl-adenylate (-COAMP), then the persulfide sulfur on the catalytic cysteine is transferred to URM1 to form thiocarboxylation (-COSH) of its C-terminus. The reaction probably involves hydrogen sulfide that is generated from the persulfide intermediate and that acts as a nucleophile towards URM1. Subsequently, a transient disulfide bond is formed. Does not use thiosulfate as sulfur donor; NFS1 probably acting as a sulfur donor for thiocarboxylation reactions. Prior mcm(5) tRNA modification by the elongator complex is required for 2-thiolation. May also be involved in protein urmylation. In Vanderwaltozyma polyspora (strain ATCC 22028 / DSM 70294 / BCRC 21397 / CBS 2163 / NBRC 10782 / NRRL Y-8283 / UCD 57-17) (Kluyveromyces polysporus), this protein is Adenylyltransferase and sulfurtransferase UBA4.